We begin with the raw amino-acid sequence, 558 residues long: Atlastin-1 (558 aa).

Residues 1-27 (MAKNRRDRNSWGGFSEKTYEWSSEEEE) form a disordered region. The segment at 1–34 (MAKNRRDRNSWGGFSEKTYEWSSEEEEPVKKAGP) is N-terminal hypervariable region (HVR). Topologically, residues 1-449 (MAKNRRDRNS…NIFHAARTPA (449 aa)) are cytoplasmic. Serine 10, serine 22, and serine 23 each carry phosphoserine. The GB1/RHD3-type G domain occupies 64 to 309 (DKEVVAVSVA…LIPWLLSPES (246 aa)). Residues arginine 77, lysine 78, glycine 79, lysine 80, serine 81, phenylalanine 82, glutamine 148, arginine 217, aspartate 218, valine 276, and asparagine 279 each contribute to the GDP site. The GTP site is built by arginine 77, lysine 78, glycine 79, lysine 80, serine 81, and phenylalanine 82. Mg(2+) is bound at residue serine 81. GTP is bound by residues arginine 217, aspartate 218, and valine 276. Residues 347 to 438 (MLQATAEANN…YIQYIKHNDS (92 aa)) are 3HB (three-helix bundle) domain. At lysine 395 the chain carries N6-acetyllysine. Residues 412–439 (EFSRRYLQQLESEIDELYIQYIKHNDSK) adopt a coiled-coil conformation. The interval 439–447 (KNIFHAART) is linker. A helical transmembrane segment spans residues 450–470 (TLFVVIFITYVIAGVTGFIGL). Position 471 (aspartate 471) is a topological domain, lumenal. A helical transmembrane segment spans residues 472–492 (IIASLCNMIMGLTLITLCTWA). The Cytoplasmic portion of the chain corresponds to 493-558 (YIRYSGEYRE…STEQSEKKKM (66 aa)). Residues 521–558 (NEALYKLYSAAATHRHLYHQAFPTPKSESTEQSEKKKM) form an autoinhibitory domain region.

The protein belongs to the TRAFAC class dynamin-like GTPase superfamily. GB1/RHD3 GTPase family. GB1 subfamily. In terms of assembly, monomeric and homodimeric. The homodimer, transiently formed by two molecules on opposing membranes, is the active form mediating ER membrane fusion. Interacts with REEP1, REEP5, RTN3 and RTN4 (via the transmembrane region); these proteins are involved in endoplasmic reticulum tubular network organization. Interacts with ZFYVE27; both proteins are involved in endoplasmic reticulum tubular network organization. Interacts with ARL6IP1; both proteins are involved in endoplasmic reticulum tubular network organization. Interacts with SPAST; the interaction is direct, could recruit SPAST to Golgi membranes. Interacts (via N-terminal region) with MAP4K4 (via CNH regulatory domain). May interact with TMED2. Interacts with CPT1C. In terms of processing, phosphorylated. Phosphorylation, by different kinases, of the N-terminal hypervariable region (HVR) regulates the ATL1-mediated membrane tethering step.

The protein localises to the endoplasmic reticulum membrane. It is found in the golgi apparatus membrane. Its subcellular location is the cell projection. It localises to the axon. The enzyme catalyses GTP + H2O = GDP + phosphate + H(+). Its function is as follows. Atlastin-1 (ATL1) is a membrane-anchored GTPase that mediates the GTP-dependent fusion of endoplasmic reticulum (ER) membranes, maintaining the continuous ER network. It facilitates the formation of three-way junctions where ER tubules intersect. Two atlastin-1 on neighboring ER tubules bind GTP and form loose homodimers through the GB1/RHD3-type G domains and 3HB regions. Upon GTP hydrolysis, the 3HB regions tighten, pulling the membranes together to drive their fusion. After fusion, the homodimer disassembles upon release of inorganic phosphate (Pi). Subsequently, GDP dissociates, resetting the monomers to a conformation ready for a new fusion cycle. May also regulate more or less directly Golgi biogenesis. Indirectly regulates axonal development. The protein is Atlastin-1 of Pongo abelii (Sumatran orangutan).